Reading from the N-terminus, the 162-residue chain is Xanthine-guanine phosphoribosyltransferase (162 aa).

5-phospho-alpha-D-ribose 1-diphosphate is bound by residues 41–42 and 92–100; these read RG and DDLVDTGNT. Asp93 lines the Mg(2+) pocket. Guanine-binding residues include Asp96 and Ile139. Xanthine is bound by residues Asp96 and Ile139. Residues 96–100 and 138–139 contribute to the GMP site; these read DTGNT and WI.

Belongs to the purine/pyrimidine phosphoribosyltransferase family. XGPT subfamily. Homotetramer. It depends on Mg(2+) as a cofactor.

Its subcellular location is the cell inner membrane. The catalysed reaction is GMP + diphosphate = guanine + 5-phospho-alpha-D-ribose 1-diphosphate. It catalyses the reaction XMP + diphosphate = xanthine + 5-phospho-alpha-D-ribose 1-diphosphate. The enzyme catalyses IMP + diphosphate = hypoxanthine + 5-phospho-alpha-D-ribose 1-diphosphate. It participates in purine metabolism; GMP biosynthesis via salvage pathway; GMP from guanine: step 1/1. Its pathway is purine metabolism; XMP biosynthesis via salvage pathway; XMP from xanthine: step 1/1. Functionally, purine salvage pathway enzyme that catalyzes the transfer of the ribosyl-5-phosphate group from 5-phospho-alpha-D-ribose 1-diphosphate (PRPP) to the N9 position of the 6-oxopurines guanine and xanthine to form the corresponding ribonucleotides GMP (guanosine 5'-monophosphate) and XMP (xanthosine 5'-monophosphate), with the release of PPi. To a lesser extent, also acts on hypoxanthine. This chain is Xanthine-guanine phosphoribosyltransferase, found in Chromohalobacter salexigens (strain ATCC BAA-138 / DSM 3043 / CIP 106854 / NCIMB 13768 / 1H11).